The sequence spans 113 residues: Prefoldin subunit beta (113 aa).

Belongs to the prefoldin subunit beta family. As to quaternary structure, heterohexamer of two alpha and four beta subunits.

The protein localises to the cytoplasm. Functionally, molecular chaperone capable of stabilizing a range of proteins. Seems to fulfill an ATP-independent, HSP70-like function in archaeal de novo protein folding. This chain is Prefoldin subunit beta, found in Methanococcus vannielii (strain ATCC 35089 / DSM 1224 / JCM 13029 / OCM 148 / SB).